The following is a 221-amino-acid chain: U1 small nuclear ribonucleoprotein C (221 aa).

Residues 4 to 36 form a Matrin-type zinc finger; sequence HYCDYCDVFLTHDSVSVRKAHNSGRNHLQNVRE. Positions 80–221 are disordered; it reads GAGPLSGSSD…PHSRTGYGPR (142 aa). Residues 142 to 158 show a composition bias toward pro residues; the sequence is YSRPPPQGGPYSRPPPD. Residues 178-190 show a composition bias toward low complexity; sequence PLGYGAPLPGAYP. Over residues 191–204 the composition is skewed to pro residues; that stretch reads SGPPPNMRGPPPPL.

It belongs to the U1 small nuclear ribonucleoprotein C family. As to quaternary structure, U1 snRNP is composed of the 7 core Sm proteins B/B', D1, D2, D3, E, F and G that assemble in a heptameric protein ring on the Sm site of the small nuclear RNA to form the core snRNP, and at least 3 U1 snRNP-specific proteins U1-70K, U1-A and U1-C. U1-C interacts with U1 snRNA and the 5' splice-site region of the pre-mRNA.

It localises to the nucleus. Functionally, component of the spliceosomal U1 snRNP, which is essential for recognition of the pre-mRNA 5' splice-site and the subsequent assembly of the spliceosome. U1-C is directly involved in initial 5' splice-site recognition for both constitutive and regulated alternative splicing. The interaction with the 5' splice-site seems to precede base-pairing between the pre-mRNA and the U1 snRNA. Stimulates commitment or early (E) complex formation by stabilizing the base pairing of the 5' end of the U1 snRNA and the 5' splice-site region. This is U1 small nuclear ribonucleoprotein C from Mycosarcoma maydis (Corn smut fungus).